The chain runs to 395 residues: NAD(P)H-quinone oxidoreductase subunit H (395 aa).

The protein belongs to the complex I 49 kDa subunit family. As to quaternary structure, NDH-1 can be composed of about 15 different subunits; different subcomplexes with different compositions have been identified which probably have different functions.

Its subcellular location is the cellular thylakoid membrane. The catalysed reaction is a plastoquinone + NADH + (n+1) H(+)(in) = a plastoquinol + NAD(+) + n H(+)(out). It catalyses the reaction a plastoquinone + NADPH + (n+1) H(+)(in) = a plastoquinol + NADP(+) + n H(+)(out). Its function is as follows. NDH-1 shuttles electrons from an unknown electron donor, via FMN and iron-sulfur (Fe-S) centers, to quinones in the respiratory and/or the photosynthetic chain. The immediate electron acceptor for the enzyme in this species is believed to be plastoquinone. Couples the redox reaction to proton translocation, and thus conserves the redox energy in a proton gradient. Cyanobacterial NDH-1 also plays a role in inorganic carbon-concentration. The polypeptide is NAD(P)H-quinone oxidoreductase subunit H (Prochlorococcus marinus (strain MIT 9515)).